Reading from the N-terminus, the 450-residue chain is 23S rRNA (uracil(1939)-C(5))-methyltransferase RlmD (450 aa).

Residues 12-70 (SKQLSAKLSLNVDQLDHLGAGIAQYQGKVVFIPGALPDETVTVQLTEQKKNYARAKLIK) enclose the TRAM domain. Residues C83, C89, C92, and C171 each coordinate [4Fe-4S] cluster. Positions 283, 312, 317, 333, 360, and 380 each coordinate S-adenosyl-L-methionine. C406 acts as the Nucleophile in catalysis.

Belongs to the class I-like SAM-binding methyltransferase superfamily. RNA M5U methyltransferase family. RlmD subfamily.

It catalyses the reaction uridine(1939) in 23S rRNA + S-adenosyl-L-methionine = 5-methyluridine(1939) in 23S rRNA + S-adenosyl-L-homocysteine + H(+). In terms of biological role, catalyzes the formation of 5-methyl-uridine at position 1939 (m5U1939) in 23S rRNA. The sequence is that of 23S rRNA (uracil(1939)-C(5))-methyltransferase RlmD from Shewanella sp. (strain W3-18-1).